We begin with the raw amino-acid sequence, 512 residues long: Acid-sensing ion channel 2 (512 aa).

Topologically, residues 1-42 (MDLKESPSEGSLQPSSIQIFANTSTLHGIRHIFVYGPLTIRR) are cytoplasmic. Phosphoserine occurs at positions 8 and 11. The chain crosses the membrane as a helical span at residues 43 to 64 (VLWAVAFVGSLGLLLVESSERV). The Extracellular portion of the chain corresponds to 65-424 (SYYFSYQHVT…ETIEQKKAYE (360 aa)). Disulfide bonds link Cys92–Cys193, Cys289–Cys364, Cys307–Cys360, Cys311–Cys358, Cys320–Cys342, and Cys322–Cys334. 2 N-linked (GlcNAc...) asparagine glycosylation sites follow: Asn365 and Asn392. Residues 425–439 (VAALLGDIGGQMGLF) form a helical membrane-spanning segment. The Cytoplasmic portion of the chain corresponds to 440–512 (IGASILTILE…TLGTLEEIAC (73 aa)). A GAS motif; ion selectivity filter motif is present at residues 441-443 (GAS).

This sequence belongs to the amiloride-sensitive sodium channel (TC 1.A.6) family. ASIC2 subfamily. In terms of assembly, can form homotrimers. Heterotrimer; forms functional heterotrimers producing channel with different properties. Forms heterotrimers with ASIC1; while ASIC1 determines current amplitude, ASIC2 influences the properties of the current. Forms heterotrimers with ASIC3; resulting in channels with distinct properties. Interacts with STOM; STOM regulates the gating of ASIC2-containing channels. Interacts with PICK1; promotes ASIC3 phosphorylation by PKC and activation of ASIC2/ASIC3 heterotrimers. Expressed in brain, cerebellum, trigeminal sensory ganglia and also detected in testis.

It is found in the cell membrane. It carries out the reaction Na(+)(in) = Na(+)(out). It catalyses the reaction K(+)(in) = K(+)(out). The catalysed reaction is Li(+)(in) = Li(+)(out). Its activity is regulated as follows. Inhibited by the diuretic drug amiloride. Inhibited by gadolinium ions, the heterotrimer with ASIC3 being more sensitive. Heterotrimer composed of ASIC1 and ASIC2 are inhibited by the snake venom mambalgin-1. Its function is as follows. Forms pH-gated trimeric sodium channels that act as postsynaptic excitatory sensors in the nervous system. Upon extracellular acidification, these channels generate rapid, transient inward currents that fully desensitize. Highly selective for sodium, they are permeable to other cations. By forming heterotrimeric channels with ASIC1, could contribute to synaptic plasticity, learning, and memory. Additionally, as acid sensors at nerve terminals, plays a role in mechanosensation and phototransduction. The chain is Acid-sensing ion channel 2 from Homo sapiens (Human).